A 196-amino-acid chain; its full sequence is MTRRAATVTRTTTETAISLSLTVDGKGEVSVTTGHGFTDHMLTLLGFWAGFDLTLTCNGDTHVDAHHTVEDAGLCLGQAFAQALGDRKGIARVGNARVPMDEALTEVDLDISGRPYLVYRGDELLPPVIAGDEADLWREFFKSFANGARINLHISLLYGKNGHHLLESAFKGLGLALRRAAACEREALLSTKGSLD.

The protein belongs to the imidazoleglycerol-phosphate dehydratase family.

The protein localises to the cytoplasm. The catalysed reaction is D-erythro-1-(imidazol-4-yl)glycerol 3-phosphate = 3-(imidazol-4-yl)-2-oxopropyl phosphate + H2O. Its pathway is amino-acid biosynthesis; L-histidine biosynthesis; L-histidine from 5-phospho-alpha-D-ribose 1-diphosphate: step 6/9. This chain is Imidazoleglycerol-phosphate dehydratase, found in Oleidesulfovibrio alaskensis (strain ATCC BAA-1058 / DSM 17464 / G20) (Desulfovibrio alaskensis).